The following is a 475-amino-acid chain: Ribulose bisphosphate carboxylase large chain (475 aa).

A propeptide spanning residues 1–2 (MS) is cleaved from the precursor. P3 is modified (N-acetylproline). K14 is subject to N6,N6,N6-trimethyllysine. The substrate site is built by N123 and T173. The Proton acceptor role is filled by K175. Position 177 (K177) interacts with substrate. Residues K201, D203, and E204 each contribute to the Mg(2+) site. K201 carries the post-translational modification N6-carboxylysine. H294 functions as the Proton acceptor in the catalytic mechanism. Residues R295, H327, and S379 each coordinate substrate.

This sequence belongs to the RuBisCO large chain family. Type I subfamily. In terms of assembly, heterohexadecamer of 8 large chains and 8 small chains; disulfide-linked. The disulfide link is formed within the large subunit homodimers. Requires Mg(2+) as cofactor. In terms of processing, the disulfide bond which can form in the large chain dimeric partners within the hexadecamer appears to be associated with oxidative stress and protein turnover.

The protein localises to the plastid. Its subcellular location is the chloroplast. The enzyme catalyses 2 (2R)-3-phosphoglycerate + 2 H(+) = D-ribulose 1,5-bisphosphate + CO2 + H2O. It catalyses the reaction D-ribulose 1,5-bisphosphate + O2 = 2-phosphoglycolate + (2R)-3-phosphoglycerate + 2 H(+). Functionally, ruBisCO catalyzes two reactions: the carboxylation of D-ribulose 1,5-bisphosphate, the primary event in carbon dioxide fixation, as well as the oxidative fragmentation of the pentose substrate in the photorespiration process. Both reactions occur simultaneously and in competition at the same active site. The sequence is that of Ribulose bisphosphate carboxylase large chain from Keteleeria davidiana (David's keteleeria).